The following is a 100-amino-acid chain: Aspartyl/glutamyl-tRNA(Asn/Gln) amidotransferase subunit C (100 aa).

This sequence belongs to the GatC family. Heterotrimer of A, B and C subunits.

It catalyses the reaction L-glutamyl-tRNA(Gln) + L-glutamine + ATP + H2O = L-glutaminyl-tRNA(Gln) + L-glutamate + ADP + phosphate + H(+). The enzyme catalyses L-aspartyl-tRNA(Asn) + L-glutamine + ATP + H2O = L-asparaginyl-tRNA(Asn) + L-glutamate + ADP + phosphate + 2 H(+). Allows the formation of correctly charged Asn-tRNA(Asn) or Gln-tRNA(Gln) through the transamidation of misacylated Asp-tRNA(Asn) or Glu-tRNA(Gln) in organisms which lack either or both of asparaginyl-tRNA or glutaminyl-tRNA synthetases. The reaction takes place in the presence of glutamine and ATP through an activated phospho-Asp-tRNA(Asn) or phospho-Glu-tRNA(Gln). The polypeptide is Aspartyl/glutamyl-tRNA(Asn/Gln) amidotransferase subunit C (Novosphingobium aromaticivorans (strain ATCC 700278 / DSM 12444 / CCUG 56034 / CIP 105152 / NBRC 16084 / F199)).